A 55-amino-acid polypeptide reads, in one-letter code: MKFQMRKCKECGEYTLEESCPECNVKTGVIFPARYSPQDKYGKYRRILKRQQMEK.

It belongs to the NOP10 family.

In terms of biological role, involved in ribosome biogenesis; more specifically in 18S rRNA pseudouridylation and in cleavage of pre-rRNA. This chain is Ribosome biogenesis protein Nop10, found in Methanosphaera stadtmanae (strain ATCC 43021 / DSM 3091 / JCM 11832 / MCB-3).